A 663-amino-acid polypeptide reads, in one-letter code: 4-hydroxy-3-methylbut-2-en-1-yl diphosphate synthase (flavodoxin) (663 aa).

Cysteine 568, cysteine 571, cysteine 602, and glutamate 609 together coordinate [4Fe-4S] cluster.

Belongs to the IspG family. [4Fe-4S] cluster is required as a cofactor.

It carries out the reaction (2E)-4-hydroxy-3-methylbut-2-enyl diphosphate + oxidized [flavodoxin] + H2O + 2 H(+) = 2-C-methyl-D-erythritol 2,4-cyclic diphosphate + reduced [flavodoxin]. Its pathway is isoprenoid biosynthesis; isopentenyl diphosphate biosynthesis via DXP pathway; isopentenyl diphosphate from 1-deoxy-D-xylulose 5-phosphate: step 5/6. Functionally, converts 2C-methyl-D-erythritol 2,4-cyclodiphosphate (ME-2,4cPP) into 1-hydroxy-2-methyl-2-(E)-butenyl 4-diphosphate. The polypeptide is 4-hydroxy-3-methylbut-2-en-1-yl diphosphate synthase (flavodoxin) (Leptospira borgpetersenii serovar Hardjo-bovis (strain JB197)).